Reading from the N-terminus, the 329-residue chain is Bile salt hydrolase/transferase (329 aa).

Residue cysteine 2 is the Nucleophile; acyl-thioester intermediate of the active site. Deoxycholate contacts are provided by cysteine 2 and arginine 18. Taurine is bound at residue asparagine 82.

Belongs to the peptidase C59 family. In terms of assembly, homotetramer. The tetramer consists of a dimer of dimers.

The catalysed reaction is glycocholate + H2O = cholate + glycine. It catalyses the reaction cholate + taurine = taurocholate + H2O. The enzyme catalyses taurodeoxycholate + H2O = deoxycholate + taurine. It carries out the reaction glycodeoxycholate + H2O = deoxycholate + glycine. The catalysed reaction is chenodeoxycholate + glycine = glycochenodeoxycholate + H2O. It catalyses the reaction taurochenodeoxycholate + H2O = chenodeoxycholate + taurine. The enzyme catalyses an L-alpha-amino acid + cholate = an N-choloyl-L-alpha-amino acid + H2O. It carries out the reaction an L-alpha-amino acid + taurocholate = an N-choloyl-L-alpha-amino acid + taurine. The catalysed reaction is glycocholate + an L-alpha-amino acid = an N-choloyl-L-alpha-amino acid + glycine. It catalyses the reaction cholate + L-histidine = L-histidocholate + H2O. The enzyme catalyses taurocholate + L-histidine = L-histidocholate + taurine. It carries out the reaction glycocholate + L-histidine = L-histidocholate + glycine. The catalysed reaction is cholate + L-arginine = L-arginocholate + H2O. It catalyses the reaction taurocholate + L-arginine = L-arginocholate + taurine. The enzyme catalyses glycocholate + L-arginine = L-arginocholate + glycine. It carries out the reaction cholate + L-phenylalanine = L-phenylalanocholate + H2O. The catalysed reaction is taurocholate + L-phenylalanine = L-phenylalanocholate + taurine. It participates in lipid metabolism; bile acid biosynthesis. In terms of biological role, possesses dual functions in bile acid metabolism. Acts as a bile salt hydrolase that catalyzes the deconjugation of glycine- and taurine-linked bile salts, which occurs naturally in the intestines of humans, releasing amino acid residues and deconjugated bile salts (bile acids). Can hydrolyze the amide bond in major human conjugated bile salts, such as glycocholate (GCA), taurocholate (TCA) and taurodeoxycholate (TDCA). Shows a slight preference for taurine-conjugated bile acids as substrates. Also acts as an amine N-acyltransferase that conjugates a wide variety of amino acids to conjugated and non-conjugated bile acids, thus producing bacterial bile acid amidates (BBAAs) - also named microbially conjugated bile acids (MCBAs) - in the gastrointestinal tract. These BBAAs may facilitate communication between the microbiota and host through the activation of human ligand-activated transcription factors. The polypeptide is Bile salt hydrolase/transferase (cbh) (Clostridium perfringens (strain 13 / Type A)).